The chain runs to 339 residues: RNA 3'-terminal phosphate cyclase (339 aa).

ATP is bound by residues Q103 and 283 to 287; that span reads HLADQ. Catalysis depends on H308, which acts as the Tele-AMP-histidine intermediate.

The protein belongs to the RNA 3'-terminal cyclase family. Type 1 subfamily.

It localises to the cytoplasm. It carries out the reaction a 3'-end 3'-phospho-ribonucleotide-RNA + ATP = a 3'-end 2',3'-cyclophospho-ribonucleotide-RNA + AMP + diphosphate. Catalyzes the conversion of 3'-phosphate to a 2',3'-cyclic phosphodiester at the end of RNA. The mechanism of action of the enzyme occurs in 3 steps: (A) adenylation of the enzyme by ATP; (B) transfer of adenylate to an RNA-N3'P to produce RNA-N3'PP5'A; (C) and attack of the adjacent 2'-hydroxyl on the 3'-phosphorus in the diester linkage to produce the cyclic end product. The biological role of this enzyme is unknown but it is likely to function in some aspects of cellular RNA processing. This is RNA 3'-terminal phosphate cyclase from Salmonella enteritidis PT4 (strain P125109).